A 202-amino-acid chain; its full sequence is Endothelin-1 (202 aa).

The N-terminal stretch at 1-25 (MDYFPVIFSLLFVAFQGAPETAVLG) is a signal peptide. The propeptide occupies 26–50 (AELSPRAEKEVQSPPPSTSWRPRRS). The segment at 28-47 (LSPRAEKEVQSPPPSTSWRP) is disordered. 2 disulfide bridges follow: cysteine 53/cysteine 67 and cysteine 55/cysteine 63. A propeptide spanning residues 74-202 (VNTPERVVPY…DQKLIHNRAH (129 aa)) is cleaved from the precursor. The interval 110–124 (CQCAHQKDKKCWNFC) is endothelin-like.

It belongs to the endothelin/sarafotoxin family.

The protein localises to the secreted. Its function is as follows. Endothelins are endothelium-derived vasoconstrictor peptides. Probable ligand for G-protein coupled receptors EDNRA and EDNRB which activates PTK2B, BCAR1, BCAR3 and, GTPases RAP1 and RHOA cascade in glomerular mesangial cells. Also binds the DEAR/FBXW7-AS1 receptor. Promotes mesenteric arterial wall remodeling via activation of ROCK signaling and subsequent colocalization of NFATC3 with F-actin filaments. NFATC3 then translocates to the nucleus where it subsequently promotes the transcription of the smooth muscle hypertrophy and differentiation marker ACTA2. The polypeptide is Endothelin-1 (Edn1) (Rattus norvegicus (Rat)).